A 212-amino-acid chain; its full sequence is Ras-related protein Rab-15 (212 aa).

Residues Ser-17, Gly-18, Val-19, Gly-20, Lys-21, Thr-22, Cys-23, Ser-35, Ser-39, and Thr-40 each contribute to the GTP site. Thr-22 provides a ligand contact to Mg(2+). Short sequence motifs (switch) lie at residues 31–45 and 63–80; these read NEFH…GVDF and DTAG…YYRR. Mg(2+)-binding residues include Thr-40 and Asp-63. 6 residues coordinate GTP: Gly-66, Asn-121, Lys-122, Asp-124, Ser-151, and Ala-152. Positions 192-212 are disordered; sequence ELEEDEGKPEGPANSSKTCWC. Residues Cys-210 and Cys-212 are each lipidated (S-geranylgeranyl cysteine). Cys-212 bears the Cysteine methyl ester mark.

This sequence belongs to the small GTPase superfamily. Rab family. In terms of assembly, the GTP bound form of RAB15 interacts with REP15. Interacts (GTP-bound form) with MICAL1, MICAL3, MICALCL, EHBP1 and EHBP1L1. The cofactor is Mg(2+).

It localises to the cell membrane. The enzyme catalyses GTP + H2O = GDP + phosphate + H(+). With respect to regulation, regulated by guanine nucleotide exchange factors (GEFs) which promote the exchange of bound GDP for free GTP. Regulated by GTPase activating proteins (GAPs) which increase the GTP hydrolysis activity. Inhibited by GDP dissociation inhibitors (GDIs). Functionally, the small GTPases Rab are key regulators of intracellular membrane trafficking, from the formation of transport vesicles to their fusion with membranes. Rabs cycle between an inactive GDP-bound form and an active GTP-bound form that is able to recruit to membranes different sets of downstream effectors directly responsible for vesicle formation, movement, tethering and fusion. RAB15 may act in concert with RAB3A in regulating aspects of synaptic vesicle membrane flow within the nerve terminal. The sequence is that of Ras-related protein Rab-15 (RAB15) from Bos taurus (Bovine).